A 1335-amino-acid polypeptide reads, in one-letter code: Xanthine dehydrogenase/oxidase (1335 aa).

Positions 7–94 constitute a 2Fe-2S ferredoxin-type domain; that stretch reads DELVFFVNGK…HVAVTTVEGI (88 aa). [2Fe-2S] cluster is bound by residues Cys46, Cys51, Cys54, Cys76, Cys115, Cys118, Cys150, and Cys152. The FAD-binding PCMH-type domain maps to 231 to 416; it reads FEGERVTWIQ…VSIVIPYSRK (186 aa). FAD-binding positions include 259–266, Phe339, 349–353, Asp362, Leu406, and Lys424; these read LVVGNTEI and SIGGN. Cys538 and Cys995 are oxidised to a cystine. Positions 770 and 801 each coordinate Mo-molybdopterin. 2 residues coordinate substrate: Glu805 and Arg883. Residue Arg915 participates in Mo-molybdopterin binding. Residues Phe917 and Thr1013 each coordinate substrate. Ala1082 provides a ligand contact to Mo-molybdopterin. The active-site Proton acceptor is Glu1264.

This sequence belongs to the xanthine dehydrogenase family. Homodimer. Interacts with BTN1A1. Requires FAD as cofactor. Mo-molybdopterin is required as a cofactor. The cofactor is [2Fe-2S] cluster. In terms of processing, subject to partial proteolysis; this alters the enzyme from the dehydrogenase form (D) to the oxidase form (O). Contains sulfhydryl groups that are easily oxidized (in vitro); this alters the enzyme from the dehydrogenase form (D) to the oxidase form (O).

The protein resides in the cytoplasm. The protein localises to the peroxisome. Its subcellular location is the secreted. It catalyses the reaction xanthine + NAD(+) + H2O = urate + NADH + H(+). The enzyme catalyses hypoxanthine + NAD(+) + H2O = xanthine + NADH + H(+). The catalysed reaction is xanthine + O2 + H2O = urate + H2O2. Can be converted from the dehydrogenase form (D) to the oxidase form (O) irreversibly by proteolysis or reversibly through the oxidation of sulfhydryl groups. Key enzyme in purine degradation. Catalyzes the oxidation of hypoxanthine to xanthine. Catalyzes the oxidation of xanthine to uric acid. Contributes to the generation of reactive oxygen species. This is Xanthine dehydrogenase/oxidase (Xdh) from Mus musculus (Mouse).